We begin with the raw amino-acid sequence, 734 residues long: Photosystem I P700 chlorophyll a apoprotein A2 (734 aa).

Transmembrane regions (helical) follow at residues 46 to 69, 135 to 158, 175 to 199, 273 to 291, 330 to 353, 369 to 395, 417 to 439, and 517 to 535; these read IFAS…FHVA, LYTG…LHLQ, LNHH…HVAI, IAHH…GHMY, LHFQ…QHMY, AALY…ILVI, AIIS…LYVH, and FLVH…LILV. Residues Cys559 and Cys568 each coordinate [4Fe-4S] cluster. The next 2 membrane-spanning stretches (helical) occupy residues 575–596 and 643–665; these read AFYL…YWHW and LSVW…MFLI. 3 residues coordinate chlorophyll a: His654, Met662, and Tyr670. Trp671 is a phylloquinone binding site. A helical transmembrane segment spans residues 707 to 727; sequence LVGLAHFSVGYIFTYAAFLIA.

The protein belongs to the PsaA/PsaB family. The PsaA/B heterodimer binds the P700 chlorophyll special pair and subsequent electron acceptors. PSI consists of a core antenna complex that captures photons, and an electron transfer chain that converts photonic excitation into a charge separation. The eukaryotic PSI reaction center is composed of at least 11 subunits. P700 is a chlorophyll a/chlorophyll a' dimer, A0 is one or more chlorophyll a, A1 is one or both phylloquinones and FX is a shared 4Fe-4S iron-sulfur center. is required as a cofactor.

It localises to the plastid. The protein resides in the chloroplast thylakoid membrane. It catalyses the reaction reduced [plastocyanin] + hnu + oxidized [2Fe-2S]-[ferredoxin] = oxidized [plastocyanin] + reduced [2Fe-2S]-[ferredoxin]. Its function is as follows. PsaA and PsaB bind P700, the primary electron donor of photosystem I (PSI), as well as the electron acceptors A0, A1 and FX. PSI is a plastocyanin-ferredoxin oxidoreductase, converting photonic excitation into a charge separation, which transfers an electron from the donor P700 chlorophyll pair to the spectroscopically characterized acceptors A0, A1, FX, FA and FB in turn. Oxidized P700 is reduced on the lumenal side of the thylakoid membrane by plastocyanin. The chain is Photosystem I P700 chlorophyll a apoprotein A2 from Atropa belladonna (Belladonna).